A 145-amino-acid polypeptide reads, in one-letter code: Hemoglobin subunit beta (145 aa).

Residues 1 to 145 (MLTAEEKAAV…VANALAHRYH (145 aa)) form the Globin domain. At Thr-11 the chain carries Phosphothreonine. Lys-58 is modified (N6-acetyllysine). His-62 lines the heme b pocket. Lys-81 is subject to N6-acetyllysine. Heme b is bound at residue His-91. Cys-92 carries the post-translational modification S-nitrosocysteine.

The protein belongs to the globin family. Heterotetramer of two alpha chains and two beta chains. Red blood cells.

Functionally, involved in oxygen transport from the lung to the various peripheral tissues. The sequence is that of Hemoglobin subunit beta (HBB) from Ovis aries musimon (Mouflon).